The sequence spans 375 residues: Outer membrane porin OmpD (375 aa).

The N-terminal stretch at 1–34 (MRKHAKKIIRIIKMKLKLVAVAVTSLLAAGVVNA) is a signal peptide.

Belongs to the Gram-negative porin family. Homotrimer. Mixed heterotrimers with other porins are also probable.

Its subcellular location is the cell outer membrane. Its function is as follows. Forms pores that allow passive diffusion of small molecules across the outer membrane. This Salmonella typhimurium (strain SL1344) protein is Outer membrane porin OmpD.